The following is a 664-amino-acid chain: Bifunctional 3-dehydroquinate synthase/phosphatase (664 aa).

Residues 1 to 352 (MKKIFDDIYV…KIIDKYKNNF (352 aa)) form a 3-dehydroquinate synthase region. Residues 61 to 66 (DGEEYK), 95 to 99 (GVICD), 119 to 120 (TS), Lys132, Lys141, and 159 to 162 (FLKT) each bind NAD(+). Residues Glu174, His238, and His255 each coordinate Zn(2+). The segment at 353 to 664 (LRASIDIGTN…GAILEGVENK (312 aa)) is GPPA/PPX.

This sequence in the N-terminal section; belongs to the sugar phosphate cyclases superfamily. Dehydroquinate synthase family. In the C-terminal section; belongs to the GppA/Ppx family. As to quaternary structure, monomer. NAD(+) is required as a cofactor. Co(2+) serves as cofactor. The cofactor is Zn(2+).

It localises to the cytoplasm. The enzyme catalyses 7-phospho-2-dehydro-3-deoxy-D-arabino-heptonate = 3-dehydroquinate + phosphate. It functions in the pathway metabolic intermediate biosynthesis; chorismate biosynthesis; chorismate from D-erythrose 4-phosphate and phosphoenolpyruvate: step 2/7. In Fusobacterium nucleatum subsp. nucleatum (strain ATCC 25586 / DSM 15643 / BCRC 10681 / CIP 101130 / JCM 8532 / KCTC 2640 / LMG 13131 / VPI 4355), this protein is Bifunctional 3-dehydroquinate synthase/phosphatase (aroB).